Here is a 249-residue protein sequence, read N- to C-terminus: Small ribosomal subunit protein uS3 (249 aa).

The 71-residue stretch at 39–109 (IRTYVLARLK…EVKIDVVEVV (71 aa)) folds into the KH type-2 domain. A compositionally biased stretch (basic and acidic residues) spans 226–239 (KERRNDAGARNRDS). The disordered stretch occupies residues 226-249 (KERRNDAGARNRDSRTKRRHRTKR). Positions 240-249 (RTKRRHRTKR) are enriched in basic residues.

Belongs to the universal ribosomal protein uS3 family. Part of the 30S ribosomal subunit. Forms a tight complex with proteins S10 and S14.

Binds the lower part of the 30S subunit head. Binds mRNA in the 70S ribosome, positioning it for translation. This chain is Small ribosomal subunit protein uS3, found in Pelodictyon phaeoclathratiforme (strain DSM 5477 / BU-1).